A 571-amino-acid polypeptide reads, in one-letter code: Kinesin light chain (571 aa).

Residues Leu-54 to Met-160 are a coiled coil. The segment covering Glu-167–Glu-177 has biased composition (basic and acidic residues). The interval Glu-167–Ala-210 is disordered. TPR repeat units lie at residues Leu-220 to Thr-253, Ala-262 to Thr-295, Ala-304 to Val-337, Ala-346 to Glu-379, Ala-388 to Lys-421, and Thr-471 to Ala-504. The segment at Gly-518–Gln-571 is disordered. Basic and acidic residues-rich tracts occupy residues Ser-526–Met-544 and Lys-551–Lys-562.

This sequence belongs to the kinesin light chain family. As to quaternary structure, oligomeric complex composed of two heavy chains and two light chains.

The protein resides in the cytoplasm. It is found in the cytoskeleton. Functionally, kinesin is a microtubule-associated force-producing protein that may play a role in organelle transport. The light chain may function in coupling of cargo to the heavy chain or in the modulation of its ATPase activity. In Doryteuthis pealeii (Longfin inshore squid), this protein is Kinesin light chain.